Here is a 206-residue protein sequence, read N- to C-terminus: Large ribosomal subunit protein uL13y (206 aa).

It belongs to the universal ribosomal protein uL13 family.

The chain is Large ribosomal subunit protein uL13y (RPL13AB) from Arabidopsis thaliana (Mouse-ear cress).